The sequence spans 644 residues: Threonine--tRNA ligase (644 aa).

Residues 1–61 enclose the TGS domain; it reads MNVSIEGQML…DGTTTIEPVY (61 aa). The interval 241 to 532 is catalytic; it reads DHRKLGQQLD…LIEQYAGAFP (292 aa). Residues C333, H384, and H509 each contribute to the Zn(2+) site.

It belongs to the class-II aminoacyl-tRNA synthetase family. As to quaternary structure, homodimer. Requires Zn(2+) as cofactor.

The protein localises to the cytoplasm. It catalyses the reaction tRNA(Thr) + L-threonine + ATP = L-threonyl-tRNA(Thr) + AMP + diphosphate + H(+). In terms of biological role, catalyzes the attachment of threonine to tRNA(Thr) in a two-step reaction: L-threonine is first activated by ATP to form Thr-AMP and then transferred to the acceptor end of tRNA(Thr). Also edits incorrectly charged L-seryl-tRNA(Thr). The sequence is that of Threonine--tRNA ligase from Nitratidesulfovibrio vulgaris (strain ATCC 29579 / DSM 644 / CCUG 34227 / NCIMB 8303 / VKM B-1760 / Hildenborough) (Desulfovibrio vulgaris).